Here is a 91-residue protein sequence, read N- to C-terminus: B3 domain-containing protein Os03g0164300 (91 aa).

Positions 1–91 (MTNAKMTFAV…VLVLKVHVLK (91 aa)) form a DNA-binding region, TF-B3.

It localises to the nucleus. In Oryza sativa subsp. japonica (Rice), this protein is B3 domain-containing protein Os03g0164300.